Consider the following 141-residue polypeptide: Transcriptional regulator MraZ (141 aa).

SpoVT-AbrB domains follow at residues 5 to 47 (TFNI…KPQD) and 76 to 119 (ANFV…DKKL).

The protein belongs to the MraZ family. Homooctamer. Forms a ring.

Its subcellular location is the cytoplasm. The protein localises to the nucleoid. This is Transcriptional regulator MraZ from Mycoplasma pneumoniae (strain ATCC 29342 / M129 / Subtype 1) (Mycoplasmoides pneumoniae).